The following is a 140-amino-acid chain: Small ribosomal subunit protein uS12 (140 aa).

Disordered regions lie at residues 36 to 56 (TYNP…MTPK) and 117 to 140 (TSGV…EKKE).

Belongs to the universal ribosomal protein uS12 family. As to quaternary structure, part of the 30S ribosomal subunit. Contacts proteins S8 and S17. May interact with IF1 in the 30S initiation complex.

Functionally, with S4 and S5 plays an important role in translational accuracy. Interacts with and stabilizes bases of the 16S rRNA that are involved in tRNA selection in the A site and with the mRNA backbone. Located at the interface of the 30S and 50S subunits, it traverses the body of the 30S subunit contacting proteins on the other side and probably holding the rRNA structure together. The combined cluster of proteins S8, S12 and S17 appears to hold together the shoulder and platform of the 30S subunit. This is Small ribosomal subunit protein uS12 from Malacoplasma penetrans (strain HF-2) (Mycoplasma penetrans).